The chain runs to 180 residues: Pro-glucagon (180 aa).

An N-terminal signal peptide occupies residues Met-1–Gln-20. Residues Asp-25–Phe-58 form a disordered region. Ser-54 is modified (phosphoserine). A propeptide spanning residues Asn-84–Ala-89 is cleaved from the precursor. Phosphoserine is present on residues Ser-105 and Ser-108. Position 127 is an arginine amide (Arg-127). Residues Asp-131–Arg-145 constitute a propeptide that is removed on maturation. Ser-150 and Ser-152 each carry phosphoserine.

It belongs to the glucagon family. Proglucagon is post-translationally processed in a tissue-specific manner in pancreatic A cells and intestinal L cells. In pancreatic A cells, the major bioactive hormone is glucagon cleaved by PCSK2/PC2. In the intestinal L cells PCSK1/PC1 liberates GLP-1, GLP-2, glicentin and oxyntomodulin. GLP-1 is further N-terminally truncated by post-translational processing in the intestinal L cells resulting in GLP-1(7-37) GLP-1-(7-36)amide. The C-terminal amidation is neither important for the metabolism of GLP-1 nor for its effects on the endocrine pancreas. As to expression, secreted in the A cells of the islets of Langerhans. In terms of tissue distribution, secreted in the A cells of the islets of Langerhans. Secreted from enteroendocrine L cells throughout the gastrointestinal tract. Also secreted in selected neurons in the brain. Secreted from enteroendocrine cells throughout the gastrointestinal tract. Also secreted in selected neurons in the brain. As to expression, secreted from enteroendocrine cells throughout the gastrointestinal tract.

The protein resides in the secreted. Its function is as follows. Plays a key role in glucose metabolism and homeostasis. Regulates blood glucose by increasing gluconeogenesis and decreasing glycolysis. A counterregulatory hormone of insulin, raises plasma glucose levels in response to insulin-induced hypoglycemia. Plays an important role in initiating and maintaining hyperglycemic conditions in diabetes. Functionally, potent stimulator of glucose-dependent insulin release. Also stimulates insulin release in response to IL6. Plays important roles on gastric motility and the suppression of plasma glucagon levels. May be involved in the suppression of satiety and stimulation of glucose disposal in peripheral tissues, independent of the actions of insulin. Has growth-promoting activities on intestinal epithelium. May also regulate the hypothalamic pituitary axis (HPA) via effects on LH, TSH, CRH, oxytocin, and vasopressin secretion. Increases islet mass through stimulation of islet neogenesis and pancreatic beta cell proliferation. Inhibits beta cell apoptosis. In terms of biological role, stimulates intestinal growth and up-regulates villus height in the small intestine, concomitant with increased crypt cell proliferation and decreased enterocyte apoptosis. The gastrointestinal tract, from the stomach to the colon is the principal target for GLP-2 action. Plays a key role in nutrient homeostasis, enhancing nutrient assimilation through enhanced gastrointestinal function, as well as increasing nutrient disposal. Stimulates intestinal glucose transport and decreases mucosal permeability. Significantly reduces food intake. Inhibits gastric emptying in humans. Suppression of gastric emptying may lead to increased gastric distension, which may contribute to satiety by causing a sensation of fullness. Its function is as follows. May modulate gastric acid secretion and the gastro-pyloro-duodenal activity. May play an important role in intestinal mucosal growth in the early period of life. This is Pro-glucagon (Gcg) from Mus musculus (Mouse).